Here is a 134-residue protein sequence, read N- to C-terminus: Large ribosomal subunit protein uL18 (134 aa).

Residues 1–25 (MSNTAQNEKRLPVGKDISTRRRTAR) form a disordered region. Residues 7–19 (NEKRLPVGKDIST) are compositionally biased toward basic and acidic residues.

Belongs to the universal ribosomal protein uL18 family. In terms of assembly, part of the 50S ribosomal subunit; part of the 5S rRNA/L5/L18/L25 subcomplex. Contacts the 5S and 23S rRNAs.

Its function is as follows. This is one of the proteins that bind and probably mediate the attachment of the 5S RNA into the large ribosomal subunit, where it forms part of the central protuberance. In Corynebacterium jeikeium (strain K411), this protein is Large ribosomal subunit protein uL18.